We begin with the raw amino-acid sequence, 310 residues long: Probable deoxyhypusine synthase (310 aa).

The active-site Nucleophile is Lys-284.

This sequence belongs to the deoxyhypusine synthase family. NAD(+) serves as cofactor.

The enzyme catalyses [eIF5A protein]-L-lysine + spermidine = [eIF5A protein]-deoxyhypusine + propane-1,3-diamine. It participates in protein modification; eIF5A hypusination. Catalyzes the NAD-dependent oxidative cleavage of spermidine and the subsequent transfer of the butylamine moiety of spermidine to the epsilon-amino group of a specific lysine residue of the eIF-5A precursor protein to form the intermediate deoxyhypusine residue. The chain is Probable deoxyhypusine synthase (dys) from Thermoplasma volcanium (strain ATCC 51530 / DSM 4299 / JCM 9571 / NBRC 15438 / GSS1).